Reading from the N-terminus, the 290-residue chain is Acetyl-coenzyme A carboxylase carboxyl transferase subunit beta (290 aa).

The region spanning 28–290 is the CoA carboxyltransferase N-terminal domain; that stretch reads LMNKCSKCGT…TVREGLSHGG (263 aa). Residues C32, C35, C51, and C54 each contribute to the Zn(2+) site. The C4-type zinc finger occupies 32-54; the sequence is CSKCGTIQYSKELDKNLKVCSSC.

This sequence belongs to the AccD/PCCB family. In terms of assembly, acetyl-CoA carboxylase is a heterohexamer composed of biotin carboxyl carrier protein (AccB), biotin carboxylase (AccC) and two subunits each of ACCase subunit alpha (AccA) and ACCase subunit beta (AccD). Zn(2+) is required as a cofactor.

It is found in the cytoplasm. It carries out the reaction N(6)-carboxybiotinyl-L-lysyl-[protein] + acetyl-CoA = N(6)-biotinyl-L-lysyl-[protein] + malonyl-CoA. The protein operates within lipid metabolism; malonyl-CoA biosynthesis; malonyl-CoA from acetyl-CoA: step 1/1. Component of the acetyl coenzyme A carboxylase (ACC) complex. Biotin carboxylase (BC) catalyzes the carboxylation of biotin on its carrier protein (BCCP) and then the CO(2) group is transferred by the transcarboxylase to acetyl-CoA to form malonyl-CoA. In Paenibacillus sp. (strain JDR-2), this protein is Acetyl-coenzyme A carboxylase carboxyl transferase subunit beta.